Here is a 423-residue protein sequence, read N- to C-terminus: TPR repeat-containing protein YpiA (423 aa).

TPR repeat units lie at residues aspartate 33–glutamate 66, threonine 67–tyrosine 100, proline 135–isoleucine 168, valine 171–proline 204, threonine 238–asparagine 271, lysine 272–phenylalanine 305, valine 306–aspartate 339, proline 340–aspartate 373, and arginine 374–asparagine 407.

Interacts with the RNA polymerase core.

This Bacillus subtilis (strain 168) protein is TPR repeat-containing protein YpiA (ypiA).